Reading from the N-terminus, the 769-residue chain is Scarecrow-like protein 14 (769 aa).

4 disordered regions span residues 1–23 (MGSYPDGFPGSMDELDFNKDFDL), 128–157 (PSSSSASSVDHPERLASDSPDGSCSGGAFS), 279–320 (TEKK…ERSN), and 364–388 (TAQSNGAKIRGKKSTSTSHSNDSKK). The GRAS domain maps to 384–765 (NDSKKETADL…RIVYASSLWV (382 aa)). A leucine repeat I (LRI) region spans residues 391–451 (ADLRTLLVLC…EARLAGTGTQ (61 aa)). The interval 470–536 (YQTYMSVCPF…GGSPKLRITG (67 aa)) is VHIID. A VHIID motif is present at residues 501–505 (IHIID). Positions 552-584 (ETGHRLARYCQRHNVPFEYNAIAQKWETIQVED) are leucine repeat II (LRII). The segment at 593–687 (VVVNSLFRFR…KEFYGREIVN (95 aa)) is PFYRE. The SAW stretch occupies residues 690–765 (ACEGTERVER…RIVYASSLWV (76 aa)).

This sequence belongs to the GRAS family. As to expression, expressed in roots, shoots, flowers and siliques.

It is found in the nucleus. In terms of biological role, probable transcription factor involved in plant development. This Arabidopsis thaliana (Mouse-ear cress) protein is Scarecrow-like protein 14 (SCL14).